We begin with the raw amino-acid sequence, 459 residues long: Adenylosuccinate synthetase isozyme 1 C (459 aa).

Positions 1–31 (MSFSWSAKDHKSYTNPPSNPTQGLKRPRNDT) are disordered. Residues 13-22 (YTNPPSNPTQ) show a composition bias toward polar residues. GTP-binding positions include 44–50 (GDEGKGK) and 72–74 (GHT). Catalysis depends on aspartate 45, which acts as the Proton acceptor. Residues aspartate 45 and glycine 72 each coordinate Mg(2+). Aspartate 45 provides a ligand contact to substrate. IMP contacts are provided by residues 45-48 (DEGK), 70-73 (NAGH), threonine 165, arginine 179, asparagine 258, threonine 273, and arginine 337. The Proton donor role is filled by histidine 73. Residue 333 to 339 (VTTGRKR) coordinates substrate. Residues arginine 339, 365 to 367 (KLD), and 447 to 450 (GVGK) each bind GTP.

The protein belongs to the adenylosuccinate synthetase family. As to quaternary structure, homodimer. Mg(2+) is required as a cofactor.

The protein resides in the cytoplasm. The catalysed reaction is IMP + L-aspartate + GTP = N(6)-(1,2-dicarboxyethyl)-AMP + GDP + phosphate + 2 H(+). It participates in purine metabolism; AMP biosynthesis via de novo pathway; AMP from IMP: step 1/2. Its function is as follows. Component of the purine nucleotide cycle (PNC), which interconverts IMP and AMP to regulate the nucleotide levels in various tissues, and which contributes to glycolysis and ammoniagenesis. Catalyzes the first committed step in the biosynthesis of AMP from IMP. This Salmo salar (Atlantic salmon) protein is Adenylosuccinate synthetase isozyme 1 C (adss1c).